Reading from the N-terminus, the 664-residue chain is Translation factor GUF1, mitochondrial (664 aa).

The 184-residue stretch at 63-246 folds into the tr-type G domain; the sequence is SNYRNFSIVA…SIINNIPPPQ (184 aa). GTP-binding positions include 72–79, 139–143, and 193–196; these read AHVDHGKS, DTPGH, and NKID.

Belongs to the TRAFAC class translation factor GTPase superfamily. Classic translation factor GTPase family. LepA subfamily.

It is found in the mitochondrion inner membrane. The enzyme catalyses GTP + H2O = GDP + phosphate + H(+). In terms of biological role, promotes mitochondrial protein synthesis. May act as a fidelity factor of the translation reaction, by catalyzing a one-codon backward translocation of tRNAs on improperly translocated ribosomes. Binds to mitochondrial ribosomes in a GTP-dependent manner. The chain is Translation factor GUF1, mitochondrial from Clavispora lusitaniae (strain ATCC 42720) (Yeast).